Here is a 120-residue protein sequence, read N- to C-terminus: MIDLDTLKYENGLILAVVQDQKSREVLMCAYMNREALEKTVKTGIAHFWSRSRKQLWKKGETSGHLQKVKEIRIDCDMDSVLLLVEQVGGACHMGYRSCFYRNLKGEVVGEKVFEPKDVY.

Residue Asp-75 coordinates Mg(2+). Cys-76 contacts Zn(2+). Positions 77 and 79 each coordinate Mg(2+). Zn(2+) contacts are provided by Cys-92 and Cys-99.

Belongs to the PRA-CH family. As to quaternary structure, homodimer. Requires Mg(2+) as cofactor. Zn(2+) is required as a cofactor.

Its subcellular location is the cytoplasm. The catalysed reaction is 1-(5-phospho-beta-D-ribosyl)-5'-AMP + H2O = 1-(5-phospho-beta-D-ribosyl)-5-[(5-phospho-beta-D-ribosylamino)methylideneamino]imidazole-4-carboxamide. It functions in the pathway amino-acid biosynthesis; L-histidine biosynthesis; L-histidine from 5-phospho-alpha-D-ribose 1-diphosphate: step 3/9. In terms of biological role, catalyzes the hydrolysis of the adenine ring of phosphoribosyl-AMP. This chain is Phosphoribosyl-AMP cyclohydrolase, found in Methanosarcina acetivorans (strain ATCC 35395 / DSM 2834 / JCM 12185 / C2A).